A 344-amino-acid chain; its full sequence is Aurora kinase B (344 aa).

Residue Thr-35 is modified to Phosphothreonine. The disordered stretch occupies residues 46–65 (NAQPTAAPGQKVVENSSGTP). At Ser-62 the chain carries Phosphoserine. Thr-64 carries the post-translational modification Phosphothreonine. One can recognise a Protein kinase domain in the interval 77–327 (FEIGRPLGKG…LAQVSAHPWV (251 aa)). Residues 83-91 (LGKGKFGNV) and Lys-106 each bind ATP. Asp-200 serves as the catalytic Proton acceptor. Lys-215 carries the post-translational modification N6-acetyllysine. Ser-227 bears the Phosphoserine mark. Position 232 is a phosphothreonine; by autocatalysis (Thr-232).

It belongs to the protein kinase superfamily. Ser/Thr protein kinase family. Aurora subfamily. Component of the chromosomal passenger complex (CPC) composed of at least BIRC5/survivin, CDCA8/borealin, INCENP, AURKB or AURKC; predominantly independent AURKB- and AURKC-containing complexes exist. Associates with RACGAP1 during M phase. Interacts with SPDYC; this interaction may be required for proper localization of active, Thr-232-phosphorylated AURKB form during prometaphase and metaphase. Interacts with p53/TP53. Interacts (via the middle kinase domain) with NOC2L (via the N- and C-terminus domains). Interacts with CDCA1. Interacts with EVI5. Interacts with JTB. Interacts with NDC80. Interacts with PSMA3. Interacts with RNF2/RING1B. Interacts with SEPTIN1. Interacts with SIRT2. Interacts with TACC1. Interacts with TTC28. In terms of processing, the phosphorylation of Thr-232 requires the binding to INCENP and occurs by means of an autophosphorylation mechanism. Thr-232 phosphorylation is indispensable for the AURKB kinase activity. Post-translationally, acetylated at Lys-215 by KAT5 at kinetochores, increasing AURKB activity and promoting accurate chromosome segregation in mitosis. Ubiquitinated by different BCR (BTB-CUL3-RBX1) E3 ubiquitin ligase complexes. Ubiquitinated by the BCR(KLHL9-KLHL13) E3 ubiquitin ligase complex, ubiquitination leads to removal from mitotic chromosomes and is required for cytokinesis. During anaphase, the BCR(KLHL21) E3 ubiquitin ligase complex recruits the CPC complex from chromosomes to the spindle midzone and mediates the ubiquitination of AURKB. Ubiquitination of AURKB by BCR(KLHL21) E3 ubiquitin ligase complex may not lead to its degradation by the proteasome. Deubiquitinated by USP35; inhibiting CDH1-mediated degradation of AURKB.

The protein resides in the nucleus. It is found in the chromosome. It localises to the centromere. Its subcellular location is the kinetochore. The protein localises to the cytoplasm. The protein resides in the cytoskeleton. It is found in the spindle. It localises to the midbody. It catalyses the reaction L-seryl-[protein] + ATP = O-phospho-L-seryl-[protein] + ADP + H(+). It carries out the reaction L-threonyl-[protein] + ATP = O-phospho-L-threonyl-[protein] + ADP + H(+). Activity is greatly increased when AURKB is within the CPC complex. In particular, AURKB-phosphorylated INCENP acts as an activator of AURKB. Positive feedback between HASPIN and AURKB contributes to CPC localization. Serine/threonine-protein kinase component of the chromosomal passenger complex (CPC), a complex that acts as a key regulator of mitosis. The CPC complex has essential functions at the centromere in ensuring correct chromosome alignment and segregation and is required for chromatin-induced microtubule stabilization and spindle assembly. Involved in the bipolar attachment of spindle microtubules to kinetochores and is a key regulator for the onset of cytokinesis during mitosis. Required for central/midzone spindle assembly and cleavage furrow formation. Key component of the cytokinesis checkpoint, a process required to delay abscission to prevent both premature resolution of intercellular chromosome bridges and accumulation of DNA damage: phosphorylates CHMP4C, leading to retain abscission-competent VPS4 (VPS4A and/or VPS4B) at the midbody ring until abscission checkpoint signaling is terminated at late cytokinesis. AURKB phosphorylates the CPC complex subunits BIRC5/survivin, CDCA8/borealin and INCENP. Phosphorylation of INCENP leads to increased AURKB activity. Other known AURKB substrates involved in centromeric functions and mitosis are CENPA, DES/desmin, GPAF, KIF2C, NSUN2, RACGAP1, SEPTIN1, VIM/vimentin, HASPIN, and histone H3. A positive feedback loop involving HASPIN and AURKB contributes to localization of CPC to centromeres. Phosphorylation of VIM controls vimentin filament segregation in cytokinetic process, whereas histone H3 is phosphorylated at 'Ser-10' and 'Ser-28' during mitosis (H3S10ph and H3S28ph, respectively). AURKB is also required for kinetochore localization of BUB1 and SGO1. Phosphorylation of p53/TP53 negatively regulates its transcriptional activity. Key regulator of active promoters in resting B- and T-lymphocytes: acts by mediating phosphorylation of H3S28ph at active promoters in resting B-cells, inhibiting RNF2/RING1B-mediated ubiquitination of histone H2A and enhancing binding and activity of the USP16 deubiquitinase at transcribed genes. Acts as an inhibitor of CGAS during mitosis: catalyzes phosphorylation of the N-terminus of CGAS during the G2-M transition, blocking CGAS liquid phase separation and activation, and thereby preventing CGAS-induced autoimmunity. Phosphorylates KRT5 during anaphase and telophase. Phosphorylates ATXN10 which promotes phosphorylation of ATXN10 by PLK1 and may play a role in the regulation of cytokinesis and stimulating the proteasomal degradation of ATXN10. In Bos taurus (Bovine), this protein is Aurora kinase B (AURKB).